The sequence spans 122 residues: Defensin-like protein 181 (122 aa).

Residues 1-26 (MERIPSLASLVSLLIIFATVVNQTRA) form the signal peptide. Cystine bridges form between C29–C70, C36–C55, C39–C64, C43–C66, C76–C122, C87–C107, C92–C116, and C96–C118.

Belongs to the DEFL family.

It localises to the secreted. Functionally, confers broad-spectrum resistance to pathogens. The sequence is that of Defensin-like protein 181 (PDF3.1) from Arabidopsis thaliana (Mouse-ear cress).